A 376-amino-acid polypeptide reads, in one-letter code: Queuine tRNA-ribosyltransferase (376 aa).

Aspartate 93 serves as the catalytic Proton acceptor. Substrate contacts are provided by residues 93–97 (DSGGF), aspartate 147, glutamine 190, and glycine 217. An RNA binding region spans residues 248–254 (GVGKPDD). Aspartate 267 (nucleophile) is an active-site residue. Zn(2+) contacts are provided by cysteine 305, cysteine 307, cysteine 310, and histidine 336.

This sequence belongs to the queuine tRNA-ribosyltransferase family. As to quaternary structure, homodimer. Within each dimer, one monomer is responsible for RNA recognition and catalysis, while the other monomer binds to the replacement base PreQ1. The cofactor is Zn(2+).

It carries out the reaction 7-aminomethyl-7-carbaguanine + guanosine(34) in tRNA = 7-aminomethyl-7-carbaguanosine(34) in tRNA + guanine. It participates in tRNA modification; tRNA-queuosine biosynthesis. Functionally, catalyzes the base-exchange of a guanine (G) residue with the queuine precursor 7-aminomethyl-7-deazaguanine (PreQ1) at position 34 (anticodon wobble position) in tRNAs with GU(N) anticodons (tRNA-Asp, -Asn, -His and -Tyr). Catalysis occurs through a double-displacement mechanism. The nucleophile active site attacks the C1' of nucleotide 34 to detach the guanine base from the RNA, forming a covalent enzyme-RNA intermediate. The proton acceptor active site deprotonates the incoming PreQ1, allowing a nucleophilic attack on the C1' of the ribose to form the product. After dissociation, two additional enzymatic reactions on the tRNA convert PreQ1 to queuine (Q), resulting in the hypermodified nucleoside queuosine (7-(((4,5-cis-dihydroxy-2-cyclopenten-1-yl)amino)methyl)-7-deazaguanosine). The chain is Queuine tRNA-ribosyltransferase from Ruegeria pomeroyi (strain ATCC 700808 / DSM 15171 / DSS-3) (Silicibacter pomeroyi).